A 662-amino-acid polypeptide reads, in one-letter code: Protein Aster-C (662 aa).

The interval 1 to 33 is disordered; it reads MEGALTARQIVNEGDSSLATELQEEPEESPGPV. Residues 70-176 form the GRAM domain; sequence EYRQQFTHLP…LIIFRLWQNV (107 aa). Residues 212–294 form a disordered region; it reads VEENVQPRSP…EKRISRAPSK (83 aa). Over residues 240 to 250 the composition is skewed to polar residues; it reads VSFTQESVSRA. A compositionally biased stretch (basic and acidic residues) spans 265–276; it reads LGKEDSQSERNV. Positions 326 to 497 constitute a VASt domain; sequence QGRLYINRVF…DLLMEESVLS (172 aa). The tract at residues 506 to 530 is disordered; sequence HSSLRRRRRTLNRTAEPVPKLSSQR. A compositionally biased stretch (basic residues) spans 507–516; it reads SSLRRRRRTL. Residues 557–577 form a helical membrane-spanning segment; it reads LIVVMSIFLLLLVLLNVTLFL.

Highly expressed in the liver. Also found in the testis.

The protein localises to the endoplasmic reticulum membrane. Its subcellular location is the cell membrane. In terms of biological role, cholesterol transporter that mediates non-vesicular transport of cholesterol from the plasma membrane (PM) to the endoplasmic reticulum (ER). Contains unique domains for binding cholesterol and the PM, thereby serving as a molecular bridge for the transfer of cholesterol from the PM to the ER. Plays a crucial role in cholesterol homeostasis and has the unique ability to localize to the PM based on the level of membrane cholesterol. In lipid-poor conditions localizes to the ER membrane and in response to excess cholesterol in the PM is recruited to the endoplasmic reticulum-plasma membrane contact sites (EPCS) which is mediated by the GRAM domain. At the EPCS, the sterol-binding VASt/ASTER domain binds to the cholesterol in the PM and facilitates its transfer from the PM to ER. The protein is Protein Aster-C (Gramd1c) of Mus musculus (Mouse).